An 838-amino-acid polypeptide reads, in one-letter code: MGDIIRIKRHHYVHILDNNTNVTRCMVGPLVYTRKENERCLFNPKPCIVVPPRFYCIVQNPCVRDASGNPVIGENSSVMLRMGEEEICFEQEPFPLQPGEVLKREEEEWLFKLKLIPVNTGYHVRCLCDFTDKNSVLRRAGTEWLVEGPQTYVPRVEVEVLREVHAHIISPNTALHIRALVKFTDRTGVPREAGDLWTVRTVGAYLPAVEEDVIGTFQGITLTDTEAVHLEALSNFTDVYGKRRRAGERWLVTKEDASIHIPDVHEKVSGKVRAIVLNEKEYCVVQNPLGADGLNEFGRKEVRKGECRFFLHPQEELLGGMQPINVVSKDQALLLQAVDFFDDNGKIRRPGEKWMLHGPAEYIPDVNVRILEQRNLIALDKNEGIYVMNTTTGVVRVVIGKPYMLNENEVLWEKDLSPKVEELLAFANGCMSEGERNPSFKSTRVRHRVVRFNVQHNAAVQIYDYKQKKLRVVLGPNLVILSPDEEFTVVSLSGGKPKVPNLLHCLQLFLGPRFSSDRIVVETSDHARLELDLSYNWYFDVNREEPDAKIFSVPDFIGDCCKTIASRIRGAVAAEDFDSFHRNSAKIIRVAVFGRGENGEINTSLRFSANNLVVTNIDIQSVEPTDAKTRDSLQKSVQLAIEITTKSQEAAARHGKERKDQEARGKLERQKLLDKIEVERTKTKWLQLQAQSEAVQASGQSVAEAKAKAESLLIEVDSELKQAEMRAKAYRITAESELKKQKQKLELELEFTKRQNELDIMKARQIAETEAERVQRMVNAIGRETIVAVAQAGPEMQAKLLGGLGLKGYLITDGKSPVNLFNTAQGLIDAGSSAQEHS.

MVP repeat units follow at residues 13-52, 53-114, 118-170, 171-223, 224-278, 280-328, 329-380, and 381-433; these read VHIL…VVPP, RFYC…FKLK, VNTG…HIIS, PNTA…ITLT, DTEA…IVLN, KEYC…NVVS, KDQA…IALD, and KNEG…CMSE.

In terms of assembly, the vault ribonucleoprotein particle is a huge (400 A x 670 A) cage structure of 12.9 MDa. It consists of a dimer of half-vaults, with each half-vault comprising 39 identical major vault protein (MVP) chains, PARP4 and one or more vault RNAs (vRNAs).

It is found in the cytoplasm. It localises to the nucleus. In terms of biological role, required for normal vault structure. Vaults are multi-subunit structures that may act as scaffolds for proteins involved in signal transduction. Vaults may also play a role in nucleo-cytoplasmic transport. This is Major vault protein from Trypanosoma cruzi (strain CL Brener).